Reading from the N-terminus, the 489-residue chain is Rhamnulokinase (489 aa).

A13–R17 is an ATP binding site. A disulfide bond links C68 and C222. Substrate contacts are provided by residues G83 and H236–T238. Catalysis depends on D237, which acts as the Proton acceptor. T259 serves as a coordination point for ATP. N296 serves as a coordination point for substrate. Q304 lines the ATP pocket. C353 and C370 form a disulfide bridge. ATP is bound at residue G402. The cysteines at positions 413 and 417 are disulfide-linked.

Belongs to the rhamnulokinase family. In terms of assembly, monomer. Requires Mg(2+) as cofactor.

The enzyme catalyses L-rhamnulose + ATP = L-rhamnulose 1-phosphate + ADP + H(+). It participates in carbohydrate degradation; L-rhamnose degradation; glycerone phosphate from L-rhamnose: step 2/3. Involved in the catabolism of L-rhamnose (6-deoxy-L-mannose). Catalyzes the transfer of the gamma-phosphate group from ATP to the 1-hydroxyl group of L-rhamnulose to yield L-rhamnulose 1-phosphate. In Escherichia coli (strain SE11), this protein is Rhamnulokinase.